The sequence spans 70 residues: Small ribosomal subunit protein bS21 (70 aa).

This sequence belongs to the bacterial ribosomal protein bS21 family.

This is Small ribosomal subunit protein bS21 from Nitrosospira multiformis (strain ATCC 25196 / NCIMB 11849 / C 71).